Here is a 1744-residue protein sequence, read N- to C-terminus: Tensin-1 (1744 aa).

Residues 15-55 form a disordered region; that stretch reads SPAVNYELPSPGQSITKQVDTPDATRSPRGGQAHRKASRSM. One can recognise a Phosphatase tensin-type domain in the interval 58–230; sequence TAAMESSCEL…HYFSGLLSGS (173 aa). In terms of domain architecture, C2 tensin-type spans 235–361; that stretch reads NKPLFLHHVI…GKVEFVFSYG (127 aa). 7 disordered regions span residues 467 to 505, 569 to 589, 666 to 686, 724 to 797, 934 to 956, 982 to 1077, and 1156 to 1437; these read TLSV…SPEE, DELP…SSLD, AQEH…PAWL, PQAP…APSR, GSQQ…QLPH, RVAG…PGLA, and VPSP…GSAV. The segment covering 468–481 has biased composition (polar residues); the sequence is LSVSSDSGNSTAST. The span at 580–589 shows a compositional bias: low complexity; that stretch reads GSLGTLSSLD. A compositionally biased stretch (polar residues) spans 728–753; sequence ARSTSSREAVQRGLNSWQQQGGSRPP. Low complexity predominate over residues 763–773; the sequence is SHSPSLSSCSP. Positions 774–783 are enriched in pro residues; that stretch reads QPSPLQPMPP. Composition is skewed to basic and acidic residues over residues 1004 to 1014 and 1041 to 1054; these read TPSDSHYEKSS and RPKE…KEAF. Polar residues predominate over residues 1060-1069; that stretch reads ASPSSLTSGG. Composition is skewed to low complexity over residues 1156–1169 and 1208–1220; these read VPSP…IHSV and SAHS…SPSS. Polar residues-rich tracts occupy residues 1344 to 1355, 1370 to 1380, and 1405 to 1420; these read LSRQSSASGYQP, GTSTPHSSSPD, and ERSN…NGKA. Over residues 1421–1435 the composition is skewed to low complexity; sequence SSPLSSGMSSPSSGS. An SH2 domain is found at 1472-1581; the sequence is WYKPDISREQ…ALPCKLVIPD (110 aa). One can recognise a PTB domain in the interval 1607–1743; sequence ACNVLFINSV…SRVMLGSGQK (137 aa).

The protein belongs to the PTEN phosphatase protein family. In terms of assembly, binds to actin filaments. Interacts with phosphotyrosine-containing proteins. In terms of processing, tyrosine phosphorylated. In terms of tissue distribution, heart, gizzard, lung and skeletal muscle.

It is found in the cell surface. It localises to the cell junction. The protein resides in the focal adhesion. Its subcellular location is the cytoplasm. The protein localises to the cytoskeleton. Functionally, may act as a protein phosphatase and/or a lipid phosphatase. Involved in fibrillar adhesion formation. Plays a role in cell polarization and migration. May be involved in cartilage development and in linking signal transduction pathways to the cytoskeleton. The chain is Tensin-1 (TNS1) from Gallus gallus (Chicken).